Consider the following 357-residue polypeptide: MLIFFNKYLHINLNILSYIPYRAIFSLLTSFFINLYIGPYFIYYFKKLQTYQIIRNNGPKTHYSKKNTPTMGGIFIIFSILFSTILYCNLSNIYIWYVISILIGYGLIGFIDDYKKIKYKNSQGLKLKWKYFFLSIIAFIFICMIKINNKDIISTELIIPFCIKNDFEINYLYIFLSYFVLVGTSNAVNLTDGLDGLAIMPVIFLTCGLTLISLFSDNINISHYLHVQYVKNSTELAILCMAIVGSGLGFLWFNSYPAKVFMGDVGSLALGGSLGAIAILLHQELLLIIMGGIFVFETISVILQIISFKIRKKRIFQMAPVHHHYEVKGILEPLIIVRFWIVSLILLLISLISLKVC.

10 consecutive transmembrane segments (helical) span residues 23 to 43, 70 to 90, 91 to 111, 127 to 147, 171 to 191, 196 to 216, 236 to 256, 260 to 280, 286 to 306, and 334 to 354; these read AIFS…YFIY, TMGG…YCNL, SNIY…IGFI, LKWK…MIKI, YLYI…VNLT, GLAI…SLFS, LAIL…FNSY, VFMG…IAIL, LLII…LQII, and LIIV…LISL.

The protein belongs to the glycosyltransferase 4 family. MraY subfamily. Requires Mg(2+) as cofactor.

The protein resides in the cell inner membrane. The catalysed reaction is UDP-N-acetyl-alpha-D-muramoyl-L-alanyl-gamma-D-glutamyl-meso-2,6-diaminopimeloyl-D-alanyl-D-alanine + di-trans,octa-cis-undecaprenyl phosphate = di-trans,octa-cis-undecaprenyl diphospho-N-acetyl-alpha-D-muramoyl-L-alanyl-D-glutamyl-meso-2,6-diaminopimeloyl-D-alanyl-D-alanine + UMP. It functions in the pathway cell wall biogenesis; peptidoglycan biosynthesis. Its function is as follows. Catalyzes the initial step of the lipid cycle reactions in the biosynthesis of the cell wall peptidoglycan: transfers peptidoglycan precursor phospho-MurNAc-pentapeptide from UDP-MurNAc-pentapeptide onto the lipid carrier undecaprenyl phosphate, yielding undecaprenyl-pyrophosphoryl-MurNAc-pentapeptide, known as lipid I. The protein is Phospho-N-acetylmuramoyl-pentapeptide-transferase of Buchnera aphidicola subsp. Acyrthosiphon pisum (strain APS) (Acyrthosiphon pisum symbiotic bacterium).